The sequence spans 181 residues: Inner membrane-spanning protein YciB (181 aa).

The next 5 helical transmembrane spans lie at 10–30, 50–70, 72–92, 118–138, and 148–168; these read LVIF…GALI, MHLI…VFHD, AFIK…LGIS, ITWY…YVAF, and FKVF…VFYL.

This sequence belongs to the YciB family.

The protein localises to the cell inner membrane. Plays a role in cell envelope biogenesis, maintenance of cell envelope integrity and membrane homeostasis. The polypeptide is Inner membrane-spanning protein YciB (Shewanella putrefaciens (strain CN-32 / ATCC BAA-453)).